The sequence spans 889 residues: Heat shock protein 70 homolog LHS1 (889 aa).

Positions 1–15 are cleaved as a signal peptide; it reads MKLSILFLFAIAVQA. Asparagine 111, asparagine 366, asparagine 462, asparagine 502, asparagine 515, asparagine 716, and asparagine 752 each carry an N-linked (GlcNAc...) asparagine glycan. The segment at 811–889 is disordered; sequence IKKQEKQNEN…SAGNVFDDEL (79 aa). 2 stretches are compositionally biased toward acidic residues: residues 820–833 and 868–889; these read NEENGDDEGDDEDE and DEEDEEEEEDDSSAGNVFDDEL. Positions 886-889 match the Prevents secretion from ER motif; sequence DDEL.

Belongs to the heat shock protein 70 family.

It localises to the endoplasmic reticulum lumen. The enzyme catalyses ATP + H2O = ADP + phosphate + H(+). Chaperone required for protein translocation and folding in the endoplasmic reticulum. This Candida glabrata (strain ATCC 2001 / BCRC 20586 / JCM 3761 / NBRC 0622 / NRRL Y-65 / CBS 138) (Yeast) protein is Heat shock protein 70 homolog LHS1 (LHS1).